A 459-amino-acid polypeptide reads, in one-letter code: uncharacterized protein (459 aa).

12 consecutive transmembrane segments (helical) span residues Ser-25 to Leu-45, Ala-52 to Ile-72, Pro-95 to Pro-115, Leu-123 to Pro-143, Ile-167 to Phe-187, Val-192 to Cys-212, Val-249 to Phe-269, Leu-279 to Pro-299, Thr-310 to Ser-330, Val-332 to Ile-352, Ser-389 to Val-409, and Ala-420 to Leu-440.

The protein belongs to the sodium:galactoside symporter (TC 2.A.2) family.

The protein resides in the cell membrane. This is an uncharacterized protein from Bacillus subtilis (strain 168).